Consider the following 576-residue polypeptide: Putative export ATP-binding/permease protein RF_0214 (576 aa).

The region spanning 20–303 is the ABC transmembrane type-1 domain; the sequence is LIIVMISLLS…IFELLSEIHL (284 aa). 6 helical membrane passes run 21–41, 61–81, 135–155, 158–178, 242–262, and 277–297; these read IIVMISLLSVSASLLLIGSVF, ILYICLLIIILSIASFFRSYF, FLSFFIRNSVMLIGGVTLMFF, FKLASIVIITIPILLIPLIKF, ALFFAISIAIIFLAITLVVWI, and IISFIYYAIIAGFSSGGIFEL. Positions 336-572 constitute an ABC transporter domain; sequence IEFKNVDFTY…SEIYRNICRE (237 aa). 371 to 378 is an ATP binding site; it reads GRSGGGKS.

The protein belongs to the ABC transporter superfamily. As to quaternary structure, homodimer.

It localises to the cell inner membrane. Functionally, part of an ABC transporter complex. Transmembrane domains (TMD) form a pore in the inner membrane and the ATP-binding domain (NBD) is responsible for energy generation. This is Putative export ATP-binding/permease protein RF_0214 from Rickettsia felis (strain ATCC VR-1525 / URRWXCal2) (Rickettsia azadi).